The following is a 447-amino-acid chain: Argininosuccinate lyase (447 aa).

Belongs to the lyase 1 family. Argininosuccinate lyase subfamily.

Its subcellular location is the cytoplasm. The catalysed reaction is 2-(N(omega)-L-arginino)succinate = fumarate + L-arginine. It participates in amino-acid biosynthesis; L-arginine biosynthesis; L-arginine from L-ornithine and carbamoyl phosphate: step 3/3. This Sulfolobus acidocaldarius (strain ATCC 33909 / DSM 639 / JCM 8929 / NBRC 15157 / NCIMB 11770) protein is Argininosuccinate lyase.